We begin with the raw amino-acid sequence, 359 residues long: Nicotinate-nucleotide--dimethylbenzimidazole phosphoribosyltransferase (359 aa).

The active-site Proton acceptor is the Glu-318.

This sequence belongs to the CobT family. Homodimer.

It catalyses the reaction 5,6-dimethylbenzimidazole + nicotinate beta-D-ribonucleotide = alpha-ribazole 5'-phosphate + nicotinate + H(+). The protein operates within nucleoside biosynthesis; alpha-ribazole biosynthesis; alpha-ribazole from 5,6-dimethylbenzimidazole: step 1/2. Functionally, catalyzes the synthesis of alpha-ribazole-5'-phosphate from nicotinate mononucleotide (NAMN) and 5,6-dimethylbenzimidazole (DMB). This Escherichia coli O81 (strain ED1a) protein is Nicotinate-nucleotide--dimethylbenzimidazole phosphoribosyltransferase.